The sequence spans 762 residues: 5-methyltetrahydropteroyltriglutamate--homocysteine methyltransferase (762 aa).

5-methyltetrahydropteroyltri-L-glutamate contacts are provided by residues 17 to 20 and Lys111; that span reads REWK. L-homocysteine is bound by residues 435 to 437 and Glu488; that span reads IGS. L-methionine contacts are provided by residues 435 to 437 and Glu488; that span reads IGS. 5-methyltetrahydropteroyltri-L-glutamate contacts are provided by residues 519 to 520 and Trp565; that span reads RC. Asp603 contributes to the L-homocysteine binding site. Asp603 is a binding site for L-methionine. Glu609 is a 5-methyltetrahydropteroyltri-L-glutamate binding site. 3 residues coordinate Zn(2+): His645, Cys647, and Glu669. His698 (proton donor) is an active-site residue. A Zn(2+)-binding site is contributed by Cys730.

It belongs to the vitamin-B12 independent methionine synthase family. The cofactor is Zn(2+).

It carries out the reaction 5-methyltetrahydropteroyltri-L-glutamate + L-homocysteine = tetrahydropteroyltri-L-glutamate + L-methionine. The protein operates within amino-acid biosynthesis; L-methionine biosynthesis via de novo pathway; L-methionine from L-homocysteine (MetE route): step 1/1. Catalyzes the transfer of a methyl group from 5-methyltetrahydrofolate to homocysteine resulting in methionine formation. The protein is 5-methyltetrahydropteroyltriglutamate--homocysteine methyltransferase of Bacillus thuringiensis (strain Al Hakam).